The primary structure comprises 256 residues: Chloroplastic group IIB intron splicing facilitator CRS2, chloroplastic (256 aa).

Residues 1–45 (MSLLAAAIPSTSSHFSAPFLPSFRMPRKSLTAPLHRIRRPRPFTV) constitute a chloroplast transit peptide. Tyr74 contacts tRNA. Catalysis depends on His79, which acts as the Proton acceptor. 3 residues coordinate tRNA: Tyr124, Asn126, and Asn172.

The protein belongs to the PTH family. CRS2 subfamily. As to quaternary structure, interacts with CAF1 and CAF2. Part of large ribonucleo-protein complexes that include group IIB introns and either CAF1 or CAF2.

The protein localises to the plastid. The protein resides in the chloroplast stroma. Required for the splicing of group IIB introns in chloroplasts. Forms complexes with either CAF1 or CAF2 which, in turn, interact with RNA and confer intron specificity of the splicing particles. Has no peptidyl-tRNA hydrolase activity. The polypeptide is Chloroplastic group IIB intron splicing facilitator CRS2, chloroplastic (CRS2) (Zea mays (Maize)).